Here is a 345-residue protein sequence, read N- to C-terminus: Glycerol-3-phosphate dehydrogenase [NAD(P)+] (345 aa).

NADPH is bound by residues serine 11, tryptophan 12, histidine 32, arginine 33, and lysine 106. Sn-glycerol 3-phosphate-binding residues include lysine 106, glycine 137, and serine 139. Alanine 141 is a binding site for NADPH. 5 residues coordinate sn-glycerol 3-phosphate: lysine 192, aspartate 245, serine 255, arginine 256, and asparagine 257. Lysine 192 functions as the Proton acceptor in the catalytic mechanism. NADPH is bound at residue arginine 256. Valine 280 and glutamate 282 together coordinate NADPH.

This sequence belongs to the NAD-dependent glycerol-3-phosphate dehydrogenase family.

The protein localises to the cytoplasm. It carries out the reaction sn-glycerol 3-phosphate + NAD(+) = dihydroxyacetone phosphate + NADH + H(+). The catalysed reaction is sn-glycerol 3-phosphate + NADP(+) = dihydroxyacetone phosphate + NADPH + H(+). The protein operates within membrane lipid metabolism; glycerophospholipid metabolism. Its function is as follows. Catalyzes the reduction of the glycolytic intermediate dihydroxyacetone phosphate (DHAP) to sn-glycerol 3-phosphate (G3P), the key precursor for phospholipid synthesis. The sequence is that of Glycerol-3-phosphate dehydrogenase [NAD(P)+] from Bacillus pumilus (strain SAFR-032).